The chain runs to 231 residues: Large ribosomal subunit protein uL1 (231 aa).

Belongs to the universal ribosomal protein uL1 family. Part of the 50S ribosomal subunit.

In terms of biological role, binds directly to 23S rRNA. The L1 stalk is quite mobile in the ribosome, and is involved in E site tRNA release. Functionally, protein L1 is also a translational repressor protein, it controls the translation of the L11 operon by binding to its mRNA. The protein is Large ribosomal subunit protein uL1 of Buchnera aphidicola subsp. Acyrthosiphon pisum (strain 5A).